We begin with the raw amino-acid sequence, 404 residues long: Bifunctional enzyme IspD/IspF (404 aa).

Positions M1–V243 are 2-C-methyl-D-erythritol 4-phosphate cytidylyltransferase. Residues R244–A404 are 2-C-methyl-D-erythritol 2,4-cyclodiphosphate synthase. Residues D250 and H252 each contribute to the a divalent metal cation site. 4-CDP-2-C-methyl-D-erythritol 2-phosphate-binding positions include D250–H252 and H276–S277. A divalent metal cation is bound at residue H284. Residues D298–G300, T374–E377, F381, and R384 contribute to the 4-CDP-2-C-methyl-D-erythritol 2-phosphate site.

The protein in the N-terminal section; belongs to the IspD/TarI cytidylyltransferase family. IspD subfamily. This sequence in the C-terminal section; belongs to the IspF family. It depends on a divalent metal cation as a cofactor.

It catalyses the reaction 2-C-methyl-D-erythritol 4-phosphate + CTP + H(+) = 4-CDP-2-C-methyl-D-erythritol + diphosphate. The catalysed reaction is 4-CDP-2-C-methyl-D-erythritol 2-phosphate = 2-C-methyl-D-erythritol 2,4-cyclic diphosphate + CMP. It functions in the pathway isoprenoid biosynthesis; isopentenyl diphosphate biosynthesis via DXP pathway; isopentenyl diphosphate from 1-deoxy-D-xylulose 5-phosphate: step 2/6. The protein operates within isoprenoid biosynthesis; isopentenyl diphosphate biosynthesis via DXP pathway; isopentenyl diphosphate from 1-deoxy-D-xylulose 5-phosphate: step 4/6. Bifunctional enzyme that catalyzes the formation of 4-diphosphocytidyl-2-C-methyl-D-erythritol from CTP and 2-C-methyl-D-erythritol 4-phosphate (MEP) (IspD), and catalyzes the conversion of 4-diphosphocytidyl-2-C-methyl-D-erythritol 2-phosphate (CDP-ME2P) to 2-C-methyl-D-erythritol 2,4-cyclodiphosphate (ME-CPP) with a corresponding release of cytidine 5-monophosphate (CMP) (IspF). The protein is Bifunctional enzyme IspD/IspF of Sinorhizobium medicae (strain WSM419) (Ensifer medicae).